A 141-amino-acid polypeptide reads, in one-letter code: 3-hydroxyacyl-[acyl-carrier-protein] dehydratase FabZ (141 aa).

Residue H49 is part of the active site.

Belongs to the thioester dehydratase family. FabZ subfamily.

The protein localises to the cytoplasm. It carries out the reaction a (3R)-hydroxyacyl-[ACP] = a (2E)-enoyl-[ACP] + H2O. Functionally, involved in unsaturated fatty acids biosynthesis. Catalyzes the dehydration of short chain beta-hydroxyacyl-ACPs and long chain saturated and unsaturated beta-hydroxyacyl-ACPs. In Fusobacterium nucleatum subsp. nucleatum (strain ATCC 25586 / DSM 15643 / BCRC 10681 / CIP 101130 / JCM 8532 / KCTC 2640 / LMG 13131 / VPI 4355), this protein is 3-hydroxyacyl-[acyl-carrier-protein] dehydratase FabZ.